An 824-amino-acid polypeptide reads, in one-letter code: Spindle-defective protein 2 (824 aa).

Composition is skewed to acidic residues over residues 16 to 27 and 35 to 44; these read EIEDSPIDDNDN and GDVELEEEEV. Residues 16–98 form a disordered region; the sequence is EIEDSPIDDN…SRPASVMSDK (83 aa). Polar residues predominate over residues 59-70; the sequence is TNMTNPKVNDLT. The span at 81–98 shows a compositional bias: low complexity; the sequence is SAASSRSASRPASVMSDK. Positions 111–131 form a coiled coil; the sequence is ENAIEEYTNQVFADENKADLL. A disordered region spans residues 189 to 252; that stretch reads RAKPGANDNE…GQYQGPNFDL (64 aa). The segment covering 207–225 has biased composition (polar residues); sequence NVPTTSDKSAFITSPMNST. The stretch at 304 to 324 forms a coiled coil; sequence NNKNQDLFAALEEARKRRAAQ. Disordered regions lie at residues 342–372 and 433–455; these read KPTS…LTTS and NNGN…VRTM. The segment covering 349 to 366 has biased composition (low complexity); it reads SGNVVSSTSNDNTTAASS.

In terms of assembly, interacts with sas-7 (via C-terminus); may be recruited to centrioles by sas-7.

The protein localises to the cytoplasm. The protein resides in the cytoskeleton. Its subcellular location is the microtubule organizing center. It is found in the centrosome. It localises to the centriole. Its function is as follows. Required both for centrosome duplication and maturation. Required for pericentriolar material (PCM) recruitment. The protein is Spindle-defective protein 2 of Caenorhabditis elegans.